Reading from the N-terminus, the 572-residue chain is Formate--tetrahydrofolate ligase (572 aa).

Residue 65-72 (TPLGEGKT) coordinates ATP.

Belongs to the formate--tetrahydrofolate ligase family.

The enzyme catalyses (6S)-5,6,7,8-tetrahydrofolate + formate + ATP = (6R)-10-formyltetrahydrofolate + ADP + phosphate. It participates in one-carbon metabolism; tetrahydrofolate interconversion. The chain is Formate--tetrahydrofolate ligase from Chloroflexus aggregans (strain MD-66 / DSM 9485).